The following is a 351-amino-acid chain: Nicotinate-nucleotide--dimethylbenzimidazole phosphoribosyltransferase (351 aa).

Residue glutamate 317 is the Proton acceptor of the active site.

This sequence belongs to the CobT family.

It catalyses the reaction 5,6-dimethylbenzimidazole + nicotinate beta-D-ribonucleotide = alpha-ribazole 5'-phosphate + nicotinate + H(+). It participates in nucleoside biosynthesis; alpha-ribazole biosynthesis; alpha-ribazole from 5,6-dimethylbenzimidazole: step 1/2. Functionally, catalyzes the synthesis of alpha-ribazole-5'-phosphate from nicotinate mononucleotide (NAMN) and 5,6-dimethylbenzimidazole (DMB). The protein is Nicotinate-nucleotide--dimethylbenzimidazole phosphoribosyltransferase of Pseudomonas aeruginosa (strain UCBPP-PA14).